The following is a 501-amino-acid chain: ATP synthase subunit alpha (501 aa).

ATP is bound at residue 169-176 (GDRQTGKT).

Belongs to the ATPase alpha/beta chains family. As to quaternary structure, F-type ATPases have 2 components, CF(1) - the catalytic core - and CF(0) - the membrane proton channel. CF(1) has five subunits: alpha(3), beta(3), gamma(1), delta(1), epsilon(1). CF(0) has three main subunits: a(1), b(2) and c(9-12). The alpha and beta chains form an alternating ring which encloses part of the gamma chain. CF(1) is attached to CF(0) by a central stalk formed by the gamma and epsilon chains, while a peripheral stalk is formed by the delta and b chains.

Its subcellular location is the cell membrane. It catalyses the reaction ATP + H2O + 4 H(+)(in) = ADP + phosphate + 5 H(+)(out). Functionally, produces ATP from ADP in the presence of a proton gradient across the membrane. The alpha chain is a regulatory subunit. This is ATP synthase subunit alpha from Streptococcus agalactiae serotype Ia (strain ATCC 27591 / A909 / CDC SS700).